Here is a 332-residue protein sequence, read N- to C-terminus: MITPRSSQSLEMKVQTELEHSPKLQEEPDRSPSLVDSSVIRIGTDEQNESPAEATSSPVEVAEDPGANLFPPPLPQPRICMWKYLDIHSMHRLEKAATVEEMREVLAELLELGGPEQSLRDAIILDLFSHALIFCRQQGFSLEQTSAACALLQDLHKACVATPLGNVEECYRYFTSVLFCHGVRRPPFSIDLFKEEQLLALADYVVNTYFRHFKLYKYVFTPQVRLDLSLSYMGLQSLHLWPEEKEDEEATVEQAATPQEEEPEAVTEAEQQPSEVCILQTYIKCQLNKELRQLQQLVEERLKESEERLSNRLAALERPYQTPPSKGKSKAK.

Polar residues predominate over residues 1 to 10; that stretch reads MITPRSSQSL. Disordered regions lie at residues 1–70, 246–271, and 308–332; these read MITP…ANLF, EDEEATVEQAATPQEEEPEAVTEAEQ, and RLSNRLAALERPYQTPPSKGKSKAK. The segment covering 14 to 30 has biased composition (basic and acidic residues); the sequence is VQTELEHSPKLQEEPDR. The segment covering 49 to 58 has biased composition (polar residues); it reads ESPAEATSSP. Residues 287–308 are a coiled coil; the sequence is LNKELRQLQQLVEERLKESEER.

In terms of tissue distribution, specifically expressed in testis (at protein level).

It localises to the cell projection. It is found in the cilium. Its subcellular location is the flagellum. The protein resides in the cytoplasmic vesicle. The protein localises to the secretory vesicle. It localises to the acrosome. It is found in the cytoplasm. In Rattus norvegicus (Rat), this protein is Cilia- and flagella-associated protein 119.